Here is a 564-residue protein sequence, read N- to C-terminus: Dihydroxy-acid dehydratase (564 aa).

Aspartate 78 provides a ligand contact to Mg(2+). Cysteine 119 provides a ligand contact to [2Fe-2S] cluster. Residues aspartate 120 and lysine 121 each contribute to the Mg(2+) site. N6-carboxylysine is present on lysine 121. A [2Fe-2S] cluster-binding site is contributed by cysteine 192. Glutamate 451 serves as a coordination point for Mg(2+). The Proton acceptor role is filled by serine 477.

The protein belongs to the IlvD/Edd family. In terms of assembly, homodimer. It depends on [2Fe-2S] cluster as a cofactor. Requires Mg(2+) as cofactor.

It carries out the reaction (2R)-2,3-dihydroxy-3-methylbutanoate = 3-methyl-2-oxobutanoate + H2O. The enzyme catalyses (2R,3R)-2,3-dihydroxy-3-methylpentanoate = (S)-3-methyl-2-oxopentanoate + H2O. It participates in amino-acid biosynthesis; L-isoleucine biosynthesis; L-isoleucine from 2-oxobutanoate: step 3/4. It functions in the pathway amino-acid biosynthesis; L-valine biosynthesis; L-valine from pyruvate: step 3/4. Functions in the biosynthesis of branched-chain amino acids. Catalyzes the dehydration of (2R,3R)-2,3-dihydroxy-3-methylpentanoate (2,3-dihydroxy-3-methylvalerate) into 2-oxo-3-methylpentanoate (2-oxo-3-methylvalerate) and of (2R)-2,3-dihydroxy-3-methylbutanoate (2,3-dihydroxyisovalerate) into 2-oxo-3-methylbutanoate (2-oxoisovalerate), the penultimate precursor to L-isoleucine and L-valine, respectively. In Nitratiruptor sp. (strain SB155-2), this protein is Dihydroxy-acid dehydratase.